Here is a 520-residue protein sequence, read N- to C-terminus: UBX domain-containing protein 11 (520 aa).

The disordered stretch occupies residues 1–26 (MSSPLASLSKTRKVPLPSEPMNPGRR). Residues 76–149 (MAFMTRKLWD…VREMERFLSD (74 aa)) are a coiled coil. The SEP domain occupies 230-294 (LEPIPLKLYR…VSDLRNQVYL (65 aa)). One can recognise a UBX domain in the interval 392–469 (PAPPLSMLRI…GLVPKAALLL (78 aa)). Positions 476-520 (KSSLKFSPGPCPGPGPGPSPGPGPGPSPGPGPGPSPCPGPSPSPQ) are disordered. The span at 484–520 (GPCPGPGPGPSPGPGPGPSPGPGPGPSPCPGPSPSPQ) shows a compositional bias: pro residues. A run of 3 repeats spans residues 487 to 494 (PGPGPGPS), 495 to 502 (PGPGPGPS), and 503 to 510 (PGPGPGPS). A 3 X 8 AA tandem repeats of P-G-P-G-P-G-P-S region spans residues 487–510 (PGPGPGPSPGPGPGPSPGPGPGPS).

As to quaternary structure, interacts with GNA12, GNA13, RND1, RND2 and RND3.

Its subcellular location is the cytoplasm. The protein localises to the cytoskeleton. Its function is as follows. May be involved in the reorganization of actin cytoskeleton mediated by RND1, RND2 and RND3. Promotes RHOA activation mediated by GNA12 and GNA13. The sequence is that of UBX domain-containing protein 11 (UBXN11) from Homo sapiens (Human).